The primary structure comprises 864 residues: DNA mismatch repair protein MutS (864 aa).

Position 613-620 (613-620 (GPNMGGKS)) interacts with ATP.

It belongs to the DNA mismatch repair MutS family.

In terms of biological role, this protein is involved in the repair of mismatches in DNA. It is possible that it carries out the mismatch recognition step. This protein has a weak ATPase activity. The sequence is that of DNA mismatch repair protein MutS from Actinobacillus pleuropneumoniae serotype 7 (strain AP76).